Here is a 142-residue protein sequence, read N- to C-terminus: MAKKVEAYIKLQVAAGMANPSPPVGPALGQRGVNIMEFCKAFNAKTESMEKGLPVPVVITVYSDRSFTFVTKTPPAAVLLKKAAGIKSGSGRPNTEKVGTVTDAQIQEIAEAKAADMTGADIEAMKRSIAGTARSMGLVVEG.

The protein belongs to the universal ribosomal protein uL11 family. Part of the ribosomal stalk of the 50S ribosomal subunit. Interacts with L10 and the large rRNA to form the base of the stalk. L10 forms an elongated spine to which L12 dimers bind in a sequential fashion forming a multimeric L10(L12)X complex. One or more lysine residues are methylated.

Forms part of the ribosomal stalk which helps the ribosome interact with GTP-bound translation factors. The protein is Large ribosomal subunit protein uL11 of Vibrio vulnificus (strain YJ016).